Reading from the N-terminus, the 225-residue chain is MGFFITFEGIEGCGKTTQLRLLKERLVALGEKVTVTREPGGCPVADQMRAILLDAKNSAITPLAELLLYAAARAQHVQEVIVPALERGETVLCDRFTDATVAYQGHGRGLDLSVIEELNTLATGRVQPALTVLIDCPVEVGLSRALARIEATSGAKEERFERESLLFHQKVRDGYLALAAAFPERFVVVDGSGDVQQTGLLVEEALRRRMQSLGKAGLTEVKAGC.

9 to 16 (GIEGCGKT) provides a ligand contact to ATP.

Belongs to the thymidylate kinase family.

The catalysed reaction is dTMP + ATP = dTDP + ADP. Functionally, phosphorylation of dTMP to form dTDP in both de novo and salvage pathways of dTTP synthesis. In Geobacter sp. (strain M21), this protein is Thymidylate kinase.